A 118-amino-acid polypeptide reads, in one-letter code: uncharacterized protein (118 aa).

The next 3 membrane-spanning stretches (helical) occupy residues 20–39 (VEGP…LLWI), 46–63 (LVVV…GEAV), and 67–85 (LSLV…AMSG). The interval 85–118 (GDKSKKKGKKQRSILKDADDWDDDSWDDEGDWDE) is disordered. Positions 88 to 97 (SKKKGKKQRS) are enriched in basic residues. A compositionally biased stretch (acidic residues) spans 103-118 (DDWDDDSWDDEGDWDE).

The protein localises to the cell membrane. This is an uncharacterized protein from Archaeoglobus fulgidus (strain ATCC 49558 / DSM 4304 / JCM 9628 / NBRC 100126 / VC-16).